The sequence spans 423 residues: Keratin, type I cytoskeletal 18 (423 aa).

An N-acetylserine modification is found at serine 2. Positions 2–71 (SFTTRSTTFS…GLAGMGGIQT (70 aa)) are head. Phosphoserine is present on residues serine 7, serine 11, serine 16, and serine 19. A phosphoserine; alternate mark is found at serine 31 and serine 32. Residues serine 31 and serine 32 are each glycosylated (O-linked (GlcNAc) serine; alternate). Residue serine 35 is modified to Phosphoserine. Tyrosine 37 bears the Phosphotyrosine mark. Residue serine 43 is modified to Phosphoserine. Arginine 46 bears the Omega-N-methylarginine mark. Serine 50 bears the Phosphoserine; alternate mark. The O-linked (GlcNAc) serine; alternate glycan is linked to serine 50. Phosphoserine; by MAPKAPK2 and MAPKAPK3 is present on serine 52. Phosphoserine occurs at positions 57 and 60. The interval 62–366 (GLAGMGGIQT…EALLNIKVKL (305 aa)) is necessary for interaction with PNN. The interaction with TRADD stretch occupies residues 69–121 (IQTEKETMQDLNDRLASYLDKVKSLETENRRLESKIREHLEKKGPQGVRDWGH). The segment at 72-107 (EKETMQDLNDRLASYLDKVKSLETENRRLESKIREH) is coil 1A. Residues 72–384 (EKETMQDLND…RLLEDGEDFS (313 aa)) form the IF rod domain. Residue lysine 73 forms a Glycyl lysine isopeptide (Lys-Gly) (interchain with G-Cter in SUMO2) linkage. Serine 85 and serine 92 each carry phosphoserine. A linker 1 region spans residues 108–125 (LEKKGPQGVRDWGHYFKI). At lysine 124 the chain carries N6-acetyllysine. The segment at 126-217 (IEDLRAQIFA…KNHEEEVQGL (92 aa)) is coil 1B. Serine 137 and serine 170 each carry phosphoserine. The segment at 218–241 (EAQIASSGLTVEVDAPKSQDLSKI) is linker 12. Residues 236 to 384 (QDLSKIMADI…RLLEDGEDFS (149 aa)) form an interaction with DNAJB6 region. Residue lysine 240 forms a Glycyl lysine isopeptide (Lys-Gly) (interchain with G-Cter in SUMO2) linkage. Residues 242–380 (MADIRAQYEA…ATYRRLLEDG (139 aa)) form a coil 2 region. Threonine 295 is modified (phosphothreonine). Serine 316 carries the phosphoserine modification. Glycyl lysine isopeptide (Lys-Gly) (interchain with G-Cter in SUMO2) cross-links involve residues lysine 363 and lysine 365. Positions 381-423 (EDFSLNDALDSSNSMQTVQKTTTRKIVDGRVVSETNDTRVLRH) are tail. A phosphoserine mark is found at serine 384, serine 391, serine 392, and serine 394. Threonine 397 is subject to Phosphothreonine.

This sequence belongs to the intermediate filament family. Heterotetramer of two type I and two type II keratins. KRT18 associates with KRT8. Interacts with PLEC isoform 1C, when in a heterodimer with KRT8. Interacts with PNN and mutated CFTR. Interacts with YWHAE, YWHAH and YWHAZ only when phosphorylated. Interacts with the thrombin-antithrombin complex. Interacts with DNAJB6, TCHP and TRADD. Interacts with FAM83H. Interacts with EPPK1. Interacts with PKP1 and PKP2. Phosphorylation increases by IL-6. In terms of processing, proteolytically cleaved by caspases during epithelial cell apoptosis. Cleavage occurs at Asp-231 by either caspase-3, caspas-6 or caspase-7. Post-translationally, O-GlcNAcylation increases solubility, and decreases stability by inducing proteasomal degradation. As to expression, expressed in endoderm, intestinal epithelial cells and in most extraembryonic tissues.

It is found in the nucleus matrix. The protein resides in the cytoplasm. Its subcellular location is the perinuclear region. It localises to the nucleus. The protein localises to the nucleolus. When phosphorylated, plays a role in filament reorganization. Involved in the delivery of mutated CFTR to the plasma membrane. Involved in the uptake of thrombin-antithrombin complexes by hepatic cells. Together with KRT8, is involved in interleukin-6 (IL-6)-mediated barrier protection. This Mus musculus (Mouse) protein is Keratin, type I cytoskeletal 18 (Krt18).